The following is a 244-amino-acid chain: tRNA pseudouridine synthase A (244 aa).

The Nucleophile role is filled by Asp55. Tyr113 contacts substrate.

It belongs to the tRNA pseudouridine synthase TruA family. In terms of assembly, homodimer.

The enzyme catalyses uridine(38/39/40) in tRNA = pseudouridine(38/39/40) in tRNA. Functionally, formation of pseudouridine at positions 38, 39 and 40 in the anticodon stem and loop of transfer RNAs. The polypeptide is tRNA pseudouridine synthase A (Phytoplasma mali (strain AT)).